The following is a 417-amino-acid chain: MSLSNKLSITDVDVKGKRVLIRVDFNVPLDENKNITNPQRIAGAIPTIKHALDNGAKAVILMSHLGRPNGAVNAKYSLKPVVPKLEELLGKPVTFAPDCVGPEVEAIVNKADNGAVILLENLRFHIEEEGSSKDKEGNKTKADKAKVEEFRKGLTALGDVYVNDAFGTAHRAHSSMVGVDLPQKAAGFLMKKELDYFAKALESPQRPFLAILGGAKVSDKIQLIDNLLDKVNTLIICGGMAFTFKKVLDNLAIGDSLFDKAGAETVPKLVEKAKAKNVKIVLPTDFITADKFDKDANTGLATDKDGIPDGWMGLDCGDESIKLYKEAIDEAKTILWNGPAGVFEFEKFAGGTKATLDAVVEGCKNGKIVIIGGGDTATVAAKYGVEDKLSHVSTGGGASLELLEGKELPGVTALSSK.

Residues Val23, Asp24, Phe25, Asn26, Gln39, Arg40, Ser63, His64, Gly66, Arg67, Leu122, Arg123, His170, and Arg171 each coordinate (2R)-3-phosphoglycerate. Gly214 contacts ADP. Gly214 provides a ligand contact to CDP. 2 residues coordinate AMP: Ala215 and Lys216. Ala215 is an ATP binding site. Mg(2+) is bound at residue Ala215. Asp219 is a CDP binding site. Asp219 serves as a coordination point for Mg(2+). Lys220 lines the AMP pocket. An ATP-binding site is contributed by Lys220. Gly238 contacts ADP. Gly238 lines the CDP pocket. Positions 239 and 313 each coordinate AMP. Residues Gly239 and Gly313 each contribute to the ATP site. Residues Gly338, Ala340, and Phe343 each contribute to the CDP site. Phe343 lines the ADP pocket. Position 344 (Glu344) interacts with AMP. Residues Glu344, Asp375, and Thr376 each coordinate ATP. Position 375 (Asp375) interacts with Mg(2+).

The protein belongs to the phosphoglycerate kinase family. Monomer. The cofactor is Mg(2+).

The protein resides in the cytoplasm. It localises to the mitochondrion. It catalyses the reaction (2R)-3-phosphoglycerate + ATP = (2R)-3-phospho-glyceroyl phosphate + ADP. Its pathway is carbohydrate degradation; glycolysis; pyruvate from D-glyceraldehyde 3-phosphate: step 2/5. In terms of biological role, catalyzes one of the two ATP producing reactions in the glycolytic pathway via the reversible conversion of 1,3-diphosphoglycerate to 3-phosphoglycerate. Both L- and D- forms of purine and pyrimidine nucleotides can be used as substrates, but the activity is much lower on pyrimidines. Negatively regulates the biosynthesis of acetyl-CoA from pyruvate in the mitochondrion. The chain is Phosphoglycerate kinase (pgk1) from Hypocrea rufa (Trichoderma viride).